A 179-amino-acid chain; its full sequence is Large ribosomal subunit protein uL5 (179 aa).

It belongs to the universal ribosomal protein uL5 family. In terms of assembly, part of the 50S ribosomal subunit; part of the 5S rRNA/L5/L18/L25 subcomplex. Contacts the 5S rRNA and the P site tRNA. Forms a bridge to the 30S subunit in the 70S ribosome.

This is one of the proteins that bind and probably mediate the attachment of the 5S RNA into the large ribosomal subunit, where it forms part of the central protuberance. In the 70S ribosome it contacts protein S13 of the 30S subunit (bridge B1b), connecting the 2 subunits; this bridge is implicated in subunit movement. Contacts the P site tRNA; the 5S rRNA and some of its associated proteins might help stabilize positioning of ribosome-bound tRNAs. The sequence is that of Large ribosomal subunit protein uL5 from Pasteurella multocida (strain Pm70).